The following is a 59-amino-acid chain: Sec-independent protein translocase protein TatA (59 aa).

Residues 1–21 form a helical membrane-spanning segment; the sequence is MGRLGLTEILVIVGIVILLFG.

Belongs to the TatA/E family. As to quaternary structure, forms a complex with TatC.

Its subcellular location is the cell inner membrane. Part of the twin-arginine translocation (Tat) system that transports large folded proteins containing a characteristic twin-arginine motif in their signal peptide across membranes. TatA could form the protein-conducting channel of the Tat system. The chain is Sec-independent protein translocase protein TatA from Flavobacterium johnsoniae (strain ATCC 17061 / DSM 2064 / JCM 8514 / BCRC 14874 / CCUG 350202 / NBRC 14942 / NCIMB 11054 / UW101) (Cytophaga johnsonae).